We begin with the raw amino-acid sequence, 136 residues long: Protein NrdI (136 aa).

It belongs to the NrdI family.

Functionally, probably involved in ribonucleotide reductase function. This chain is Protein NrdI, found in Salmonella typhi.